We begin with the raw amino-acid sequence, 694 residues long: Heat shock protein homolog SSE1 (694 aa).

The tract at residues 671–694 is disordered; it reads AQRSADSEAKKDATPEGDAQMDLD. Residues 675 to 684 are compositionally biased toward basic and acidic residues; it reads ADSEAKKDAT.

The protein belongs to the heat shock protein 70 family.

It is found in the cytoplasm. The polypeptide is Heat shock protein homolog SSE1 (SSE1) (Candida glabrata (strain ATCC 2001 / BCRC 20586 / JCM 3761 / NBRC 0622 / NRRL Y-65 / CBS 138) (Yeast)).